A 711-amino-acid chain; its full sequence is Polyribonucleotide nucleotidyltransferase (711 aa).

Asp491 and Asp497 together coordinate Mg(2+). One can recognise a KH domain in the interval 559 to 618 (PRLITIKINPEKIRDVIGKGGAVIRALTEETGTQIDISDEGVVTIASVDAAAGQEAKRRI). The S1 motif domain maps to 628 to 696 (GKIYEGTVLK…DRGRLKLSMK (69 aa)).

Belongs to the polyribonucleotide nucleotidyltransferase family. Mg(2+) is required as a cofactor.

It is found in the cytoplasm. It catalyses the reaction RNA(n+1) + phosphate = RNA(n) + a ribonucleoside 5'-diphosphate. Its function is as follows. Involved in mRNA degradation. Catalyzes the phosphorolysis of single-stranded polyribonucleotides processively in the 3'- to 5'-direction. The protein is Polyribonucleotide nucleotidyltransferase of Janthinobacterium sp. (strain Marseille) (Minibacterium massiliensis).